A 102-amino-acid polypeptide reads, in one-letter code: Acid shock protein (102 aa).

A signal peptide spans 1–21 (MKKVLGLVVAAAMGLSSAAFA). Residues 22 to 41 (AETATTPAPTATTTKAAPAK) are compositionally biased toward low complexity. Residues 22–58 (AETATTPAPTATTTKAAPAKTTHHKKQHKAAPAQKAQ) constitute a propeptide that is removed on maturation. Positions 22-102 (AETATTPAPT…PAKPAAQPAA (81 aa)) are disordered. Positions 80 to 90 (AAKKHAGKHSH) are enriched in basic residues. A compositionally biased stretch (low complexity) spans 91-102 (QQPAKPAAQPAA).

Belongs to the Asr family. Post-translationally, proteolytic processing gives rise to the active protein.

The protein resides in the periplasm. In terms of biological role, required for growth and/or survival at acidic conditions. The polypeptide is Acid shock protein (Escherichia coli (strain SE11)).